Reading from the N-terminus, the 440-residue chain is Sialyltransferase-like protein 2 (440 aa).

Residues 1–5 (MKLLH) are Cytoplasmic-facing. Residues 6 to 26 (LIFLLALTTGISAVLIYIIGV) traverse the membrane as a helical; Signal-anchor for type II membrane protein segment. Topologically, residues 27–440 (SNLYESNRFT…HGQLCITPAD (414 aa)) are lumenal. N-linked (GlcNAc...) asparagine glycans are attached at residues Asn-113 and Asn-149.

Belongs to the glycosyltransferase 29 family.

Its subcellular location is the golgi apparatus membrane. In terms of biological role, may be involved in the transfer of 2-keto-3-deoxy-D-lyxo-heptulosaric acid (Dha) and/or 2-keto-3-deoxy-D-manno-octulosonic acid (Kdo) on the homogalacturonan backbone of rhamnogalacturonan-II. Required for efficient pollen grain germination and pollen tube elongation. Does not possess sialyltransferase activity in vitro. This is Sialyltransferase-like protein 2 from Arabidopsis thaliana (Mouse-ear cress).